The primary structure comprises 187 residues: LSM complex subunit LSM4 (187 aa).

The Sm domain occupies 2–85 (LPLYLLTNAK…IKFIKLQDNI (84 aa)). Residues 93-187 (INSNNNSNSN…NSSSPQKVEF (95 aa)) form a disordered region. The segment covering 112-167 (NRDSNNNRGNYNRRNNNNGNSNRRPYSQNRQYNNSNSSNINNSINSINSNNQNMNN) has biased composition (low complexity). At Arg-119 the chain carries Omega-N-methylarginine. Residues 175–187 (HHFNSSSPQKVEF) are compositionally biased toward polar residues. Position 181 is a phosphoserine (Ser-181).

This sequence belongs to the snRNP Sm proteins family. As to quaternary structure, component of the heptameric LSM1-LSM7 complex that forms a seven-membered ring structure with a donut shape. The LSm subunits are arranged in the order LSM1, LSM2, LSM3, LSM6, LSM5, LSM7 and LSM4. Except for LSM1, where a C-terminal helix crosses the ring structure to form additional interactions with LSM3 and LSM6, each subunit interacts only with its two neighboring subunits. The LSM1-LSM7 complex interacts with PAT1; within the complex PAT1 has direct interactions with LSM2 and LSM3. The LSM1-LSM7 complex interacts with XRN1. Component of the heptameric LSM2-LSM8 complex that forms a seven-membered ring structure with a donut shape; an RNA strand can pass through the hole in the center of the ring structure. The LSm subunits are arranged in the order LSM8, LSM2, LSM3, LSM6, LSM5, LSM7 and LSM4. Component of the spliceosome U4/U6-U5 tri-snRNP complex composed of the U4, U6 and U5 snRNAs and at least PRP3, PRP4, PRP6, PRP8, PRP18, PRP31, PRP38, SNU13, SNU23, SNU66, SNU114, SPP381, SMB1, SMD1, SMD2, SMD3, SMX2, SMX3, LSM2, LSM3, LSM4, LSM5, LSM6, LSM7, LSM8, BRR2 and DIB1. May be found in a complex comprising LSM2-LSM7 without LSM1 or LSM8; the complex associates with pre-P RNA and snoRNA SNR5.

The protein localises to the nucleus. The protein resides in the cytoplasm. Component of LSm protein complexes, which are involved in RNA processing and may function in a chaperone-like manner. Component of the cytoplasmic LSM1-LSM7 complex which is involved in mRNA degradation by activating the decapping step. Together with PAT1, the LSM1-LSM7 complex binds to osmotic stress-activated mRNAs to attenuate the osmotic stress response, probably by limiting ribosome access to the mRNA and consequently translation. Component of the nuclear LSM2-LSM8 complex, which is involved in spliceosome assembly. The LSM2-LSM8 complex plays a role in the biogenesis of the spliceosomal U4/U6-U5 tri-snRNP complex by accelerating PRP24-mediated annealing of U4/U6 di-snRNA. The LSM2-LSM8 complex binds U6 snRNA terminating with a non-cyclic 3' phosphate group. LSM2-LSM8 is probably also involved in degradation of nuclear pre-mRNA by targeting them for decapping. LSM2-LSM8 could be involved in processing of pre-tRNAs, pre-rRNAs and U3 snoRNA, although involvement may be indirect. In a complex that probably contains LSM2-LSM7, but not LSM1 or LSM8, associates with the precursor of the RNA component of RNase P (pre-P RNA) and may be involved in maturing pre-P RNA; the complex also associates with snoRNA SNR5. This is LSM complex subunit LSM4 from Saccharomyces cerevisiae (strain ATCC 204508 / S288c) (Baker's yeast).